The primary structure comprises 253 residues: Chitooligosaccharide deacetylase (253 aa).

Residues His61 and His126 each contribute to the Mg(2+) site.

This sequence belongs to the YdjC deacetylase family. ChbG subfamily. Homodimer. Mg(2+) serves as cofactor.

Its subcellular location is the cytoplasm. It carries out the reaction N,N'-diacetylchitobiose + H2O = N-acetyl-beta-D-glucosaminyl-(1-&gt;4)-D-glucosamine + acetate. It catalyses the reaction diacetylchitobiose-6'-phosphate + H2O = N'-monoacetylchitobiose-6'-phosphate + acetate. The protein operates within glycan degradation; chitin degradation. Involved in the degradation of chitin. ChbG is essential for growth on the acetylated chitooligosaccharides chitobiose and chitotriose but is dispensable for growth on cellobiose and chitosan dimer, the deacetylated form of chitobiose. Deacetylation of chitobiose-6-P and chitotriose-6-P is necessary for both the activation of the chb promoter by the regulatory protein ChbR and the hydrolysis of phosphorylated beta-glucosides by the phospho-beta-glucosidase ChbF. Catalyzes the removal of only one acetyl group from chitobiose-6-P to yield monoacetylchitobiose-6-P, the inducer of ChbR and the substrate of ChbF. This chain is Chitooligosaccharide deacetylase, found in Yersinia pestis bv. Antiqua (strain Angola).